The sequence spans 385 residues: dTDP-4-dehydro-2,3,6-trideoxy-D-glucose 4-aminotransferase (385 aa).

Lys-182 is subject to N6-(pyridoxal phosphate)lysine.

It belongs to the DegT/DnrJ/EryC1 family. In terms of assembly, homodimer. Pyridoxal 5'-phosphate serves as cofactor.

The enzyme catalyses dTDP-4-amino-2,3,4,6-tetradeoxy-alpha-D-erythro-hexopyranose + 2-oxoglutarate = dTDP-4-dehydro-2,3,6-trideoxy-alpha-D-hexopyranose + L-glutamate. Functionally, involved in the biosynthesis of forosamine ((4-dimethylamino)-2,3,4,6-tetradeoxy-alpha-D-threo-hexopyranose), a highly deoxygenated sugar component of several bioactive natural products such as the insecticidal spinosyns A and D. In the presence of pyridoxal 5'-phosphate (PLP) and alpha-ketoglutarate, catalyzes the C-4 transamination of dTDP-4-keto-2,3,6-trideoxy-alpha-D-glucose to yield dTDP-4-amino-2,3,4,6-tetradeoxy-alpha-D-glucose. It can also use pyruvate, but less efficiently than alpha-ketoglutarate. Also able to catalyze the C-4 transamination of dTDP-4-keto-2,6-dideoxy-alpha-D-glucose to yield dTDP-4-amino-2,4,6-trideoxy-D-glucose. This chain is dTDP-4-dehydro-2,3,6-trideoxy-D-glucose 4-aminotransferase, found in Saccharopolyspora spinosa.